The sequence spans 250 residues: 2,3-bisphosphoglycerate-dependent phosphoglycerate mutase (250 aa).

Substrate-binding positions include 10-17 (RHGESQWN), 23-24 (TG), arginine 62, 89-92 (ERHY), lysine 100, 116-117 (RR), and 185-186 (GN). Histidine 11 serves as the catalytic Tele-phosphohistidine intermediate. The Proton donor/acceptor role is filled by glutamate 89.

It belongs to the phosphoglycerate mutase family. BPG-dependent PGAM subfamily. Homodimer.

It carries out the reaction (2R)-2-phosphoglycerate = (2R)-3-phosphoglycerate. It functions in the pathway carbohydrate degradation; glycolysis; pyruvate from D-glyceraldehyde 3-phosphate: step 3/5. Its function is as follows. Catalyzes the interconversion of 2-phosphoglycerate and 3-phosphoglycerate. This Pectobacterium carotovorum subsp. carotovorum (strain PC1) protein is 2,3-bisphosphoglycerate-dependent phosphoglycerate mutase.